We begin with the raw amino-acid sequence, 197 residues long: Protein GrpE (197 aa).

Basic and acidic residues predominate over residues 1 to 12 (MTDSDGKTDKSG). The segment at 1-35 (MTDSDGKTDKSGEPAAEVEPVVSKPYVMPDDPEDD) is disordered.

The protein belongs to the GrpE family. In terms of assembly, homodimer.

The protein resides in the cytoplasm. Participates actively in the response to hyperosmotic and heat shock by preventing the aggregation of stress-denatured proteins, in association with DnaK and GrpE. It is the nucleotide exchange factor for DnaK and may function as a thermosensor. Unfolded proteins bind initially to DnaJ; upon interaction with the DnaJ-bound protein, DnaK hydrolyzes its bound ATP, resulting in the formation of a stable complex. GrpE releases ADP from DnaK; ATP binding to DnaK triggers the release of the substrate protein, thus completing the reaction cycle. Several rounds of ATP-dependent interactions between DnaJ, DnaK and GrpE are required for fully efficient folding. This chain is Protein GrpE, found in Nitrobacter winogradskyi (strain ATCC 25391 / DSM 10237 / CIP 104748 / NCIMB 11846 / Nb-255).